We begin with the raw amino-acid sequence, 150 residues long: Small ribosomal subunit protein uS13 (150 aa).

This sequence belongs to the universal ribosomal protein uS13 family. As to quaternary structure, part of the 30S ribosomal subunit. Forms a loose heterodimer with protein S19. Forms two bridges to the 50S subunit in the 70S ribosome.

Functionally, located at the top of the head of the 30S subunit, it contacts several helices of the 16S rRNA. In the 70S ribosome it contacts the 23S rRNA (bridge B1a) and protein L5 of the 50S subunit (bridge B1b), connecting the 2 subunits; these bridges are implicated in subunit movement. The protein is Small ribosomal subunit protein uS13 of Aeropyrum pernix (strain ATCC 700893 / DSM 11879 / JCM 9820 / NBRC 100138 / K1).